Here is a 215-residue protein sequence, read N- to C-terminus: NAD(P)H-hydrate epimerase (215 aa).

Residues 10 to 212 form the YjeF N-terminal domain; sequence SRELDDKTIN…DIGIYRGNAF (203 aa). 59-63 is a (6S)-NADPHX binding site; the sequence is NNGGD. K(+)-binding residues include asparagine 60 and aspartate 122. (6S)-NADPHX contacts are provided by residues 126 to 132 and aspartate 155; that span reads GSGLSRN. Residue serine 158 coordinates K(+).

It belongs to the NnrE/AIBP family. Requires K(+) as cofactor.

It carries out the reaction (6R)-NADHX = (6S)-NADHX. It catalyses the reaction (6R)-NADPHX = (6S)-NADPHX. Its function is as follows. Catalyzes the epimerization of the S- and R-forms of NAD(P)HX, a damaged form of NAD(P)H that is a result of enzymatic or heat-dependent hydration. This is a prerequisite for the S-specific NAD(P)H-hydrate dehydratase to allow the repair of both epimers of NAD(P)HX. The sequence is that of NAD(P)H-hydrate epimerase from Lentilactobacillus buchneri (strain NRRL B-30929) (Lactobacillus buchneri).